The primary structure comprises 157 residues: DNA gyrase inhibitor 2 (157 aa).

Belongs to the DNA gyrase inhibitor family. As to quaternary structure, interacts with DNA gyrase.

Its subcellular location is the cytoplasm. Functionally, inhibits the supercoiling activity of DNA gyrase. Acts by inhibiting DNA gyrase at an early step, prior to (or at the step of) binding of DNA by the gyrase. It protects cells against toxins that target DNA gyrase, by inhibiting activity of these toxins and reducing the formation of lethal double-strand breaks in the cell. This is DNA gyrase inhibitor 2 from Dickeya dadantii (strain 3937) (Erwinia chrysanthemi (strain 3937)).